We begin with the raw amino-acid sequence, 287 residues long: Pyridoxal 5'-phosphate synthase subunit PdxS (287 aa).

D21 provides a ligand contact to D-ribose 5-phosphate. Residue K78 is the Schiff-base intermediate with D-ribose 5-phosphate of the active site. G150 contacts D-ribose 5-phosphate. D-glyceraldehyde 3-phosphate is bound at residue R162. D-ribose 5-phosphate contacts are provided by residues G211 and 232 to 233 (GS).

This sequence belongs to the PdxS/SNZ family. In the presence of PdxT, forms a dodecamer of heterodimers.

The catalysed reaction is aldehydo-D-ribose 5-phosphate + D-glyceraldehyde 3-phosphate + L-glutamine = pyridoxal 5'-phosphate + L-glutamate + phosphate + 3 H2O + H(+). It participates in cofactor biosynthesis; pyridoxal 5'-phosphate biosynthesis. Its function is as follows. Catalyzes the formation of pyridoxal 5'-phosphate from ribose 5-phosphate (RBP), glyceraldehyde 3-phosphate (G3P) and ammonia. The ammonia is provided by the PdxT subunit. Can also use ribulose 5-phosphate and dihydroxyacetone phosphate as substrates, resulting from enzyme-catalyzed isomerization of RBP and G3P, respectively. The polypeptide is Pyridoxal 5'-phosphate synthase subunit PdxS (Francisella tularensis subsp. tularensis (strain FSC 198)).